The chain runs to 37 residues: Large ribosomal subunit protein bL36 (37 aa).

This sequence belongs to the bacterial ribosomal protein bL36 family.

In Laribacter hongkongensis (strain HLHK9), this protein is Large ribosomal subunit protein bL36.